A 578-amino-acid chain; its full sequence is Arginine--tRNA ligase (578 aa).

A 'HIGH' region motif is present at residues 122–132; the sequence is PNVAKEMHVGH.

It belongs to the class-I aminoacyl-tRNA synthetase family. Monomer.

Its subcellular location is the cytoplasm. It carries out the reaction tRNA(Arg) + L-arginine + ATP = L-arginyl-tRNA(Arg) + AMP + diphosphate. The chain is Arginine--tRNA ligase from Shigella sonnei (strain Ss046).